The chain runs to 329 residues: Ketol-acid reductoisomerase (NADP(+)) (329 aa).

The KARI N-terminal Rossmann domain maps to 2–181; the sequence is VQKYYESDAD…GATRAVVFET (180 aa). NADP(+) contacts are provided by residues 25 to 28, Arg-48, Ser-52, and 82 to 85; these read YGSQ and DENQ. His-107 is an active-site residue. Gly-133 lines the NADP(+) pocket. The KARI C-terminal knotted domain occupies 182 to 327; it reads TFAEETETDL…AEIRGFMPQF (146 aa). 4 residues coordinate Mg(2+): Asp-190, Glu-194, Glu-226, and Glu-230. Substrate is bound at residue Ser-251.

The protein belongs to the ketol-acid reductoisomerase family. It depends on Mg(2+) as a cofactor.

The catalysed reaction is (2R)-2,3-dihydroxy-3-methylbutanoate + NADP(+) = (2S)-2-acetolactate + NADPH + H(+). It carries out the reaction (2R,3R)-2,3-dihydroxy-3-methylpentanoate + NADP(+) = (S)-2-ethyl-2-hydroxy-3-oxobutanoate + NADPH + H(+). It functions in the pathway amino-acid biosynthesis; L-isoleucine biosynthesis; L-isoleucine from 2-oxobutanoate: step 2/4. The protein operates within amino-acid biosynthesis; L-valine biosynthesis; L-valine from pyruvate: step 2/4. Its function is as follows. Involved in the biosynthesis of branched-chain amino acids (BCAA). Catalyzes an alkyl-migration followed by a ketol-acid reduction of (S)-2-acetolactate (S2AL) to yield (R)-2,3-dihydroxy-isovalerate. In the isomerase reaction, S2AL is rearranged via a Mg-dependent methyl migration to produce 3-hydroxy-3-methyl-2-ketobutyrate (HMKB). In the reductase reaction, this 2-ketoacid undergoes a metal-dependent reduction by NADPH to yield (R)-2,3-dihydroxy-isovalerate. This is Ketol-acid reductoisomerase (NADP(+)) from Methanoculleus marisnigri (strain ATCC 35101 / DSM 1498 / JR1).